A 417-amino-acid polypeptide reads, in one-letter code: Exodeoxyribonuclease 7 large subunit (417 aa).

This sequence belongs to the XseA family. Heterooligomer composed of large and small subunits.

The protein resides in the cytoplasm. It carries out the reaction Exonucleolytic cleavage in either 5'- to 3'- or 3'- to 5'-direction to yield nucleoside 5'-phosphates.. In terms of biological role, bidirectionally degrades single-stranded DNA into large acid-insoluble oligonucleotides, which are then degraded further into small acid-soluble oligonucleotides. In Lactococcus lactis subsp. cremoris (strain MG1363), this protein is Exodeoxyribonuclease 7 large subunit.